Reading from the N-terminus, the 301-residue chain is MAKPLIIPAQSMSFSLSWRDYFEMTKPKVVALMLLTVLVGMCLALPGAVPLQPLVFGMLGIAMMAGSAAAFNHLIDRRIDGLMARTYNRPLPKGKLSVNKAFSFAFSLGVLGFVLLYWWVNPLTAWLTFASLIGYAVVYTAYLKRATPQNIVIGGLAGAMPPLLGWTAVTNELHGNALLLVIIIFTWTPPHFWALAIHRKAEYAKVDIPMLPVTHGVEFTKTCILLYTFLLALACLLPVLVGMSGPVYLVGSSILSCGFIYKAWQLKYQDEPGLAMKVFKFSIYHLMLLFVVLLVDHYLWG.

9 helical membrane-spanning segments follow: residues 29–49 (VVAL…PGAV), 51–71 (LQPL…AAAF), 101–121 (AFSF…WWVN), 123–143 (LTAW…TAYL), 150–170 (NIVI…TAVT), 177–197 (ALLL…ALAI), 223–243 (CILL…LVGM), 244–264 (SGPV…YKAW), and 281–301 (FSIY…YLWG).

This sequence belongs to the UbiA prenyltransferase family. Protoheme IX farnesyltransferase subfamily.

Its subcellular location is the cell inner membrane. It carries out the reaction heme b + (2E,6E)-farnesyl diphosphate + H2O = Fe(II)-heme o + diphosphate. It participates in porphyrin-containing compound metabolism; heme O biosynthesis; heme O from protoheme: step 1/1. In terms of biological role, converts heme B (protoheme IX) to heme O by substitution of the vinyl group on carbon 2 of heme B porphyrin ring with a hydroxyethyl farnesyl side group. The sequence is that of Protoheme IX farnesyltransferase from Shewanella denitrificans (strain OS217 / ATCC BAA-1090 / DSM 15013).